A 339-amino-acid chain; its full sequence is Pre-mRNA-splicing factor CWC2 (339 aa).

A C3H1-type zinc finger spans residues 67-94 (DGQLFFCLFFAKGMCCLGPKCEYLHHIP). An RRM domain is found at 135–228 (KTLYVGGIDG…TGLLVKWANE (94 aa)). The segment at 313–339 (SRENISSKPSVGKLGGPLLDYLSSDED) is disordered. Phosphoserine is present on residues Ser335 and Ser336.

The protein belongs to the RRM CWC2 family. Belongs to the CWC complex (or CEF1-associated complex), a spliceosome subcomplex composed of the U2, U5 and U6 snRNAs and at least BUD13, BUD31, BRR2, CDC40, CEF1, CLF1, CUS1, CWC2, CWC15, CWC21, CWC22, CWC23, CWC24, CWC25, CWC27, ECM2, HSH155, IST3, ISY1, LEA1, MSL1, NTC20, PRP8, PRP9, PRP11, PRP19, PRP21, PRP22, PRP45, PRP46, SLU7, SMB1, SMD1, SMD2, SMD3, SMX2, SMX3, SNT309, SNU114, SPP2, SYF1, SYF2, RSE1 and YJU2. Interacts with ISY1. Interacts with PRP19.

It localises to the nucleus. Functionally, involved in the first step of pre-mRNA splicing. Required for cell growth and cell cycle control. Plays a role in the levels of the U1, U4, U5 and U6 snRNAs and the maintenance of the U4/U6 snRNA complex. May provide the link between the 'nineteen complex' NTC spliceosome protein complex and the spliceosome through the U6 snRNA. Associates predominantly with U6 snRNAs in assembled active spliceosomes. Binds directly to the internal stem-loop (ISL) domain of the U6 snRNA and to the pre-mRNA intron near the 5' splice site during the activation and catalytic phases of the spliceosome cycle. Binds also to U1, U4, U5 and U6 snRNAs and to pre-mRNAs, in vitro. Is not required for the Prp2-mediated remodeling of the activated spliceosome. This Saccharomyces cerevisiae (strain ATCC 204508 / S288c) (Baker's yeast) protein is Pre-mRNA-splicing factor CWC2 (CWC2).